We begin with the raw amino-acid sequence, 298 residues long: Ectoine dioxygenase (298 aa).

Basic and acidic residues predominate over residues methionine 1–proline 18. Positions methionine 1–proline 26 are disordered. Residue glutamine 133 participates in L-ectoine binding. Fe cation-binding residues include histidine 150, aspartate 152, and histidine 251.

It belongs to the PhyH family. EctD subfamily. As to quaternary structure, homodimer. It depends on Fe(2+) as a cofactor.

The enzyme catalyses L-ectoine + 2-oxoglutarate + O2 = 5-hydroxyectoine + succinate + CO2. Functionally, involved in the biosynthesis of 5-hydroxyectoine, called compatible solute, which helps organisms to survive extreme osmotic stress by acting as a highly soluble organic osmolyte. Catalyzes the 2-oxoglutarate-dependent selective hydroxylation of L-ectoine to yield (4S,5S)-5-hydroxyectoine. The protein is Ectoine dioxygenase of Nocardia farcinica (strain IFM 10152).